The sequence spans 292 residues: Probable 2-(5''-triphosphoribosyl)-3'-dephosphocoenzyme-A synthase (292 aa).

The protein belongs to the CitG/MdcB family.

It catalyses the reaction 3'-dephospho-CoA + ATP = 2'-(5''-triphospho-alpha-D-ribosyl)-3'-dephospho-CoA + adenine. The protein is Probable 2-(5''-triphosphoribosyl)-3'-dephosphocoenzyme-A synthase of Shigella sonnei (strain Ss046).